The chain runs to 362 residues: Cyclic di-GMP phosphodiesterase PdeL (362 aa).

The region spanning 18 to 83 (HLSLPGSVSE…TFWRDIFFQY (66 aa)) is the HTH luxR-type domain. The segment at residues 42–61 (VTEISQYRNRSAKTISHQKK) is a DNA-binding region (H-T-H motif). In terms of domain architecture, EAL spans 106-360 (HIVTPEAISL…KFISEWVMKA (255 aa)). Gln-127 contributes to the substrate binding site. Glu-141 is a binding site for Mg(2+). Substrate-binding positions include 144 to 145 (VR) and Asn-200. Residues Asn-200, Glu-232, and Asp-262 each contribute to the Mg(2+) site. Substrate-binding positions include Asp-262, Lys-286, 319 to 322 (EGVE), and Tyr-341.

In terms of assembly, is in a fast thermodynamic monomer-homodimer equilibrium. Dimerization is required for PDE activity. Dimerization affinity is increased about 100-fold upon substrate binding. Mg(2+) serves as cofactor. The cofactor is Mn(2+).

The catalysed reaction is 3',3'-c-di-GMP + H2O = 5'-phosphoguanylyl(3'-&gt;5')guanosine + H(+). Its activity is regulated as follows. Strongly inhibited by Ca(2+). In terms of biological role, acts both as an enzyme and as a c-di-GMP sensor to couple transcriptional activity to the c-di-GMP status of the cell. Phosphodiesterase (PDE) that catalyzes the hydrolysis of cyclic-di-GMP (c-di-GMP) to 5'-pGpG. Also acts as a transcription factor to control its own expression. In Escherichia coli (strain K12), this protein is Cyclic di-GMP phosphodiesterase PdeL.